We begin with the raw amino-acid sequence, 327 residues long: Tetraacyldisaccharide 4'-kinase (327 aa).

Position 58 to 65 (58 to 65 (TVGGTGKT)) interacts with ATP.

This sequence belongs to the LpxK family.

The catalysed reaction is a lipid A disaccharide + ATP = a lipid IVA + ADP + H(+). It functions in the pathway glycolipid biosynthesis; lipid IV(A) biosynthesis; lipid IV(A) from (3R)-3-hydroxytetradecanoyl-[acyl-carrier-protein] and UDP-N-acetyl-alpha-D-glucosamine: step 6/6. In terms of biological role, transfers the gamma-phosphate of ATP to the 4'-position of a tetraacyldisaccharide 1-phosphate intermediate (termed DS-1-P) to form tetraacyldisaccharide 1,4'-bis-phosphate (lipid IVA). The chain is Tetraacyldisaccharide 4'-kinase from Alcanivorax borkumensis (strain ATCC 700651 / DSM 11573 / NCIMB 13689 / SK2).